We begin with the raw amino-acid sequence, 680 residues long: GTPase Obg (680 aa).

Residues 2 to 160 (DQFIDVVSFE…LNIRLEVKLI (159 aa)) form the Obg domain. The region spanning 161–336 (ADIGLVGMPN…LDGDMLDKVT (176 aa)) is the OBG-type G domain. GTP-binding positions include 167-174 (GMPNTGKS), 192-196 (FTTLT), 214-217 (DIPG), 281-284 (NKTD), and 317-319 (PEI). Mg(2+) is bound by residues serine 174 and threonine 194. Positions 371-680 (TKRVFGPVVS…NGVLSYAVNI (310 aa)) are radical SAM domain. Residues 383–613 (LGNSLGIDVI…IEIDVPSVSD (231 aa)) form the Radical SAM core domain. 3 residues coordinate [4Fe-4S] cluster: cysteine 397, cysteine 401, and cysteine 404.

The protein belongs to the TRAFAC class OBG-HflX-like GTPase superfamily. OBG GTPase family. In terms of assembly, monomer. Mg(2+) serves as cofactor. Requires [4Fe-4S] cluster as cofactor.

The protein resides in the cytoplasm. Functionally, an essential GTPase which binds GTP, GDP and possibly (p)ppGpp with moderate affinity, with high nucleotide exchange rates and a fairly low GTP hydrolysis rate. Plays a role in control of the cell cycle, stress response, ribosome biogenesis and in those bacteria that undergo differentiation, in morphogenesis control. The polypeptide is GTPase Obg (Brachyspira hyodysenteriae (strain ATCC 49526 / WA1)).